Reading from the N-terminus, the 212-residue chain is Floral homeotic protein PMADS 2 (212 aa).

Positions 3–58 (RGKIEIKRIENSSNRQVTYSKRRNGIIKKAKEITVLCDAKVSLIIFGNSGKMHEYC) constitute an MADS-box domain. The 87-residue stretch at 84–170 (HENLSNEIDR…QYALHQKEMA (87 aa)) folds into the K-box domain.

Predominantly expressed in petals and stamens, less in carpels and sepals.

Its subcellular location is the nucleus. Functionally, transcription factor involved in the genetic control of flower development. This is Floral homeotic protein PMADS 2 (PMADS2) from Petunia hybrida (Petunia).